The chain runs to 1005 residues: Pikachurin (1005 aa).

The first 24 residues, Met1 to Ser24, serve as a signal peptide directing secretion. 2 Fibronectin type-III domains span residues Pro37–Gln136 and Ala144–Pro239. Asn47 carries N-linked (GlcNAc...) asparagine glycosylation. Residues Pro281–Gly328 are disordered. Over residues Ala305 to Glu314 the composition is skewed to polar residues. Residues Phe339–Ser377 form the EGF-like 1 domain. 11 disulfide bridges follow: Cys343–Cys354, Cys348–Cys365, Cys367–Cys376, Cys530–Cys560, Cys565–Cys576, Cys570–Cys586, Cys588–Cys597, Cys784–Cys795, Cys789–Cys804, Cys806–Cys815, and Cys975–Cys1002. In terms of domain architecture, Laminin G-like 1 spans Ile382–Cys560. EGF-like domains lie at Ser561–Glu598 and Ala780–Gln816. In terms of domain architecture, Laminin G-like 2 spans Ile605–Cys784. The region spanning Ile823–Cys1002 is the Laminin G-like 3 domain.

In terms of assembly, interacts with DAG1 alpha-dystroglycan. Interacts with GPR158 and GPR179; transsynaptic interaction is required for synaptic organization of photoreceptor cells. O-glycosylated; contains chondroitin sulfate and heparan sulfate.

It localises to the secreted. Its subcellular location is the extracellular space. The protein resides in the extracellular matrix. It is found in the synaptic cleft. The protein localises to the presynaptic active zone. Functionally, involved in both the retinal photoreceptor ribbon synapse formation and physiological functions of visual perception. Plays a key role in the synaptic organization of photoreceptors by mediating transsynaptic interaction between alpha-dystroglycan and GPR179 on the postsynaptic membrane. Necessary for proper bipolar dendritic tip apposition to the photoreceptor ribbon synapse. Promotes matrix assembly and cell adhesiveness. The sequence is that of Pikachurin (Egflam) from Rattus norvegicus (Rat).